The primary structure comprises 765 residues: SNF-related serine/threonine-protein kinase (765 aa).

Residues 16–269 (YDLDKTLGRG…LEEIENHPWL (254 aa)) form the Protein kinase domain. Residues 22 to 30 (LGRGHFAVV) and K45 contribute to the ATP site. Catalysis depends on D139, which acts as the Proton acceptor. S162 bears the Phosphoserine mark. A Phosphothreonine; by LKB1 modification is found at T173. The UBA domain occupies 291–334 (SEEEHNSIIQRMVLGDIADRDAIVEALETNRYNHITATYFLLAE). Phosphoserine occurs at positions 362, 390, 482, 495, and 518. The interval 512-634 (LKMNIASPGT…RCAGPSNSMQ (123 aa)) is disordered. The segment covering 522–532 (VHKRYHRRKSQ) has biased composition (basic residues). Residues 533-542 (GRGSSCSSSE) show a composition bias toward low complexity. R534 is subject to Omega-N-methylarginine. The span at 549–558 (ESRRRLDKDS) shows a compositional bias: basic and acidic residues. Residues 603-614 (AGGGSPSSGSGG) show a composition bias toward gly residues. A Phosphoserine modification is found at S607.

This sequence belongs to the protein kinase superfamily. CAMK Ser/Thr protein kinase family. Requires Mg(2+) as cofactor. Post-translationally, autophosphorylated. Phosphorylation on Thr-173 by STK11/LKB1 in complex with STE20-related adapter-alpha (STRADA) pseudo kinase and CAB39. As to expression, expressed in hematopoietic progenitor cells and leukemic cell lines. Weakly expressed in the testis.

Its subcellular location is the nucleus. The catalysed reaction is L-seryl-[protein] + ATP = O-phospho-L-seryl-[protein] + ADP + H(+). It carries out the reaction L-threonyl-[protein] + ATP = O-phospho-L-threonyl-[protein] + ADP + H(+). Activated by phosphorylation on Thr-173. Its function is as follows. May play a role in hematopoietic cell proliferation or differentiation. Potential mediator of neuronal apoptosis. The polypeptide is SNF-related serine/threonine-protein kinase (Homo sapiens (Human)).